The primary structure comprises 143 residues: Nuclear transcription factor Y subunit B-4 (143 aa).

Residues 1-23 (MSEGFDGTENGGGGGGGGVGKEQ) are disordered. Residues 9–20 (ENGGGGGGGGVG) are compositionally biased toward gly residues. A DNA-binding region spans residues 27-33 (LPIANIG). The tract at residues 54 to 65 (VQECVSEFISFI) is subunit association domain (SAD). Over residues 117–130 (KGSRASELPVKKDV) the composition is skewed to basic and acidic residues. The interval 117–143 (KGSRASELPVKKDVVLNGDPGSSFEGM) is disordered.

It belongs to the NFYB/HAP3 subunit family. In terms of assembly, heterotrimeric transcription factor composed of three components, NF-YA, NF-YB and NF-YC. NF-YB and NF-YC must interact and dimerize for NF-YA association and DNA binding. As to expression, ubiquitous.

Its subcellular location is the nucleus. Its function is as follows. Component of the NF-Y/HAP transcription factor complex. The NF-Y complex stimulates the transcription of various genes by recognizing and binding to a CCAAT motif in promoters. May regulate the expression of photosynthetic genes, and may be involved in chloroplast and amyloplast development. The polypeptide is Nuclear transcription factor Y subunit B-4 (NFYB4) (Oryza sativa subsp. japonica (Rice)).